A 694-amino-acid chain; its full sequence is Elongation factor G (694 aa).

One can recognise a tr-type G domain in the interval 8-287 (EDYRNFGIMA…AVVEFLPAPT (280 aa)). GTP contacts are provided by residues 17–24 (AHIDAGKT), 86–90 (DTPGH), and 140–143 (NKMD).

The protein belongs to the TRAFAC class translation factor GTPase superfamily. Classic translation factor GTPase family. EF-G/EF-2 subfamily.

Its subcellular location is the cytoplasm. Catalyzes the GTP-dependent ribosomal translocation step during translation elongation. During this step, the ribosome changes from the pre-translocational (PRE) to the post-translocational (POST) state as the newly formed A-site-bound peptidyl-tRNA and P-site-bound deacylated tRNA move to the P and E sites, respectively. Catalyzes the coordinated movement of the two tRNA molecules, the mRNA and conformational changes in the ribosome. The polypeptide is Elongation factor G (Brucella melitensis biotype 2 (strain ATCC 23457)).